The chain runs to 137 residues: Putative pre-16S rRNA nuclease (137 aa).

The protein belongs to the YqgF nuclease family.

Its subcellular location is the cytoplasm. Its function is as follows. Could be a nuclease involved in processing of the 5'-end of pre-16S rRNA. The protein is Putative pre-16S rRNA nuclease of Anaeromyxobacter dehalogenans (strain 2CP-1 / ATCC BAA-258).